A 279-amino-acid chain; its full sequence is Putative pyruvate, phosphate dikinase regulatory protein (279 aa).

Position 156 to 163 (156 to 163 (GISRVGKT)) interacts with ADP.

It belongs to the pyruvate, phosphate/water dikinase regulatory protein family. PDRP subfamily.

The enzyme catalyses N(tele)-phospho-L-histidyl/L-threonyl-[pyruvate, phosphate dikinase] + ADP = N(tele)-phospho-L-histidyl/O-phospho-L-threonyl-[pyruvate, phosphate dikinase] + AMP + H(+). The catalysed reaction is N(tele)-phospho-L-histidyl/O-phospho-L-threonyl-[pyruvate, phosphate dikinase] + phosphate + H(+) = N(tele)-phospho-L-histidyl/L-threonyl-[pyruvate, phosphate dikinase] + diphosphate. In terms of biological role, bifunctional serine/threonine kinase and phosphorylase involved in the regulation of the pyruvate, phosphate dikinase (PPDK) by catalyzing its phosphorylation/dephosphorylation. This Chloroflexus aurantiacus (strain ATCC 29366 / DSM 635 / J-10-fl) protein is Putative pyruvate, phosphate dikinase regulatory protein.